A 90-amino-acid polypeptide reads, in one-letter code: Probable Fe(2+)-trafficking protein (90 aa).

This sequence belongs to the Fe(2+)-trafficking protein family.

Could be a mediator in iron transactions between iron acquisition and iron-requiring processes, such as synthesis and/or repair of Fe-S clusters in biosynthetic enzymes. The protein is Probable Fe(2+)-trafficking protein of Xylella fastidiosa (strain M23).